The primary structure comprises 494 residues: Splicing regulatory glutamine/lysine-rich protein 1 (494 aa).

Residues 69-145 (RTVYVGNLNS…RPLKINHSNN (77 aa)) form the RRM domain. Serine 174 and serine 187 each carry phosphoserine. Positions 176–494 (ISAAIEPESG…ERLCSTADAV (319 aa)) are disordered. A compositionally biased stretch (basic and acidic residues) spans 183 to 192 (ESGKSNERKG). Composition is skewed to basic residues over residues 193-230 (GRSRSHTRSKSRSSSKSHSRRKRSQSKHRSRSHNRSRS) and 238-262 (SKSPHKKRSKSRERRKSRSRSRSRD). Residues 263 to 340 (KRKDTREKVK…DRSKEADEKR (78 aa)) are compositionally biased toward basic and acidic residues. Phosphothreonine is present on threonine 348. Over residues 357–373 (RRSRSASRERRRRRSRS) the composition is skewed to basic residues. Basic and acidic residues-rich tracts occupy residues 404-453 (REKE…KEAD) and 463-474 (KDTARTEEESKA).

This sequence belongs to the splicing factor SR family. As to quaternary structure, interacts with SREK1IP1. Homodimer. Binds SFRS1, SFRS2, SFRS3 and SFRS6. Interacts with the spliceosome. As to expression, ubiquitous. Detected in liver, brain, lung, spleen, testis and pancreas.

The protein resides in the nucleus. Functionally, participates in the regulation of alternative splicing by modulating the activity of other splice facors. Inhibits the splicing activity of SFRS1, SFRS2 and SFRS6. Augments the splicing activity of SFRS3. In Rattus norvegicus (Rat), this protein is Splicing regulatory glutamine/lysine-rich protein 1 (Srek1).